The chain runs to 130 residues: Small ribosomal subunit protein uS8 (130 aa).

Belongs to the universal ribosomal protein uS8 family. As to quaternary structure, part of the 30S ribosomal subunit. Contacts proteins S5 and S12.

In terms of biological role, one of the primary rRNA binding proteins, it binds directly to 16S rRNA central domain where it helps coordinate assembly of the platform of the 30S subunit. In Hahella chejuensis (strain KCTC 2396), this protein is Small ribosomal subunit protein uS8.